The chain runs to 107 residues: Ribonuclease P protein component 4 (107 aa).

Residues C62, C65, C87, and C90 each contribute to the Zn(2+) site.

Belongs to the eukaryotic/archaeal RNase P protein component 4 family. As to quaternary structure, consists of a catalytic RNA component and at least 4-5 protein subunits. Zn(2+) serves as cofactor.

The protein localises to the cytoplasm. It catalyses the reaction Endonucleolytic cleavage of RNA, removing 5'-extranucleotides from tRNA precursor.. Part of ribonuclease P, a protein complex that generates mature tRNA molecules by cleaving their 5'-ends. The polypeptide is Ribonuclease P protein component 4 (Archaeoglobus fulgidus (strain ATCC 49558 / DSM 4304 / JCM 9628 / NBRC 100126 / VC-16)).